A 354-amino-acid polypeptide reads, in one-letter code: MEEESISGLEVRFYQTQCLSEDNVIKFENNGYPMIDLILFSDAYQIQRNTSIPIETVTLIQRNLQRLFSSVPINGYQHYLDVKEFKTHYSSGIKLLDQLLGGNGFTSGEIYELVGNTSCGKTQISMCCSLNLSQQYNSNIIYIDSSNSFSPPRLIEIFKSNYLIKQRQKQQQKQQQKQHQKQQENNDKIEQDKILKILDRIKVFNCFDSITLLELLSTIDSTLSIISDEIPTFENQFYKGLKMVVIDSIGTLLAPIIGGKQTQGHYTMMMISRLIKYIADTYQIIFLITNNTVGGNSFDNKAALGEAWSMVPNHQLMINHQYNDDENEERSIYIEKSTRLPVSIIFIINLYWLF.

An ATP-binding site is contributed by 115 to 122 (GNTSCGKT).

This sequence belongs to the RecA family. RAD51 subfamily.

Its subcellular location is the nucleus. Its function is as follows. Involved in the homologous recombination repair (HRR) pathway of double-stranded DNA breaks arising during DNA replication or induced by DNA-damaging agents. The protein is Probable DNA repair protein RAD51 homolog 4 (rad51d) of Dictyostelium discoideum (Social amoeba).